Reading from the N-terminus, the 149-residue chain is Large ribosomal subunit protein bL9 (149 aa).

Belongs to the bacterial ribosomal protein bL9 family.

Its function is as follows. Binds to the 23S rRNA. The sequence is that of Large ribosomal subunit protein bL9 from Helicobacter pylori (strain J99 / ATCC 700824) (Campylobacter pylori J99).